We begin with the raw amino-acid sequence, 231 residues long: ADP-ribose pyrophosphatase (231 aa).

Phe-2 is modified (N-acetylserine). Substrate-binding positions include Trp-46, 64–65 (WD), Arg-69, and Arg-103. Positions 75 to 214 (GGVDGIGILT…DQQGYKLDAR (140 aa)) constitute a Nudix hydrolase domain. Mg(2+) is bound at residue Ala-115. The Nudix box signature appears at 116–137 (GLIDAGEDIDTAALRELKEETG). Leu-117 provides a ligand contact to substrate. Positions 131 and 135 each coordinate Mg(2+). A substrate-binding site is contributed by Asp-152. Residue Glu-185 participates in Mg(2+) binding.

The protein belongs to the Nudix hydrolase family. NudF subfamily. Mg(2+) is required as a cofactor. The cofactor is Mn(2+).

It carries out the reaction ADP-D-ribose + H2O = D-ribose 5-phosphate + AMP + 2 H(+). This chain is ADP-ribose pyrophosphatase (YSA1), found in Saccharomyces cerevisiae (strain ATCC 204508 / S288c) (Baker's yeast).